Here is a 99-residue protein sequence, read N- to C-terminus: Leydig cell tumor 10 kDa protein homolog (99 aa).

The tract at residues 1-37 (MAQGQRKFQARKPAKSKTAATASEKNRGPRKGGRVIA) is disordered. Positions 28–37 (GPRKGGRVIA) are enriched in basic residues.

It belongs to the UPF0390 family.

Its function is as follows. May have a potential role in hypercalcemia of malignancy. The polypeptide is Leydig cell tumor 10 kDa protein homolog (Pongo abelii (Sumatran orangutan)).